Consider the following 274-residue polypeptide: Large ribosomal subunit protein uL2cz (274 aa).

Disordered stretches follow at residues 1–25 (MAIHLYKTSTPSTRNGTVDSQVKSN) and 224–274 (NPVD…RRSK). A compositionally biased stretch (polar residues) spans 7-25 (KTSTPSTRNGTVDSQVKSN).

This sequence belongs to the universal ribosomal protein uL2 family. Part of the 50S ribosomal subunit.

Its subcellular location is the plastid. It is found in the chloroplast. The protein is Large ribosomal subunit protein uL2cz (rpl2-A) of Coffea arabica (Arabian coffee).